The following is a 276-amino-acid chain: Large ribosomal subunit protein uL2 (276 aa).

Disordered stretches follow at residues 37–59 (QIQK…GGHK) and 225–276 (VMNP…RHKR). Polar residues predominate over residues 39–49 (QKSGRNNNGHI). Positions 50–59 (TTRHKGGGHK) are enriched in basic residues.

The protein belongs to the universal ribosomal protein uL2 family. Part of the 50S ribosomal subunit. Forms a bridge to the 30S subunit in the 70S ribosome.

In terms of biological role, one of the primary rRNA binding proteins. Required for association of the 30S and 50S subunits to form the 70S ribosome, for tRNA binding and peptide bond formation. It has been suggested to have peptidyltransferase activity; this is somewhat controversial. Makes several contacts with the 16S rRNA in the 70S ribosome. This Ralstonia pickettii (strain 12J) protein is Large ribosomal subunit protein uL2.